We begin with the raw amino-acid sequence, 240 residues long: Sugar fermentation stimulation protein homolog (240 aa).

Belongs to the SfsA family.

In Saccharolobus solfataricus (strain ATCC 35092 / DSM 1617 / JCM 11322 / P2) (Sulfolobus solfataricus), this protein is Sugar fermentation stimulation protein homolog.